Here is a 294-residue protein sequence, read N- to C-terminus: MAVTASMVKELREKTGAGMMDCKKALVEVDGDMEKAIDYLREKGIAKAEKKADRVAAEGLASVVTEGNKAVILEVNSETDFVAKNENFQALVTELAEHILAEEPADVEAALAQPFKGGSETVQDHINTAIAKIGEKLSLRRFTVVEKEDADVFGSYLHMGGRIGVLTVIGSSSDQELAKDIAMHVAAINPTYVSRDEVTKDVVDRERDVLKQQALNEGKPENIVEKMVEGRLSKFFEQVCLLDQPFVKDGDQKVGKYVKSKQASVKSFVRYEVGEGIEKREDNFAEEVMSQVKK.

The segment at 79–82 is involved in Mg(2+) ion dislocation from EF-Tu; it reads TDFV.

This sequence belongs to the EF-Ts family.

Its subcellular location is the cytoplasm. Functionally, associates with the EF-Tu.GDP complex and induces the exchange of GDP to GTP. It remains bound to the aminoacyl-tRNA.EF-Tu.GTP complex up to the GTP hydrolysis stage on the ribosome. In Shouchella clausii (strain KSM-K16) (Alkalihalobacillus clausii), this protein is Elongation factor Ts.